Reading from the N-terminus, the 558-residue chain is Arginine--tRNA ligase (558 aa).

Residues 119 to 129 carry the 'HIGH' region motif; sequence PNIAKPMSMGH.

This sequence belongs to the class-I aminoacyl-tRNA synthetase family. Monomer.

The protein resides in the cytoplasm. The enzyme catalyses tRNA(Arg) + L-arginine + ATP = L-arginyl-tRNA(Arg) + AMP + diphosphate. The sequence is that of Arginine--tRNA ligase from Lactobacillus johnsonii (strain CNCM I-12250 / La1 / NCC 533).